Here is a 409-residue protein sequence, read N- to C-terminus: Nucleoprotein (409 aa).

5 disordered regions span residues M1–N32, N45–G69, D122–S145, R164–D194, and V238–N259. Residues P15–G31 are compositionally biased toward low complexity. Positions S29–L160 are RNA-binding. Residues G31–D156 enclose the CoV N NTD domain. The segment covering D122–D138 has biased composition (basic and acidic residues). A compositionally biased stretch (low complexity) spans R164 to A179. Composition is skewed to basic and acidic residues over residues P180–S192 and K247–N259. Phosphoserine; by host is present on residues S190 and S192. Residues A219 to P331 form the CoV N CTD domain. The segment at R226 to D333 is dimerization. A disulfide bridge connects residues C320 and C323. The disordered stretch occupies residues G326–L409. Residues R341–Q357 are compositionally biased toward low complexity. A compositionally biased stretch (basic residues) spans Q358–K367. At T378 the chain carries Phosphothreonine; by host. S379 carries the post-translational modification Phosphoserine; by host.

Belongs to the gammacoronavirus nucleocapsid protein family. In terms of assembly, homooligomer. Both monomeric and oligomeric forms interact with RNA. Interacts with protein M. Interacts with NSP3; this interaction serves to tether the genome to the newly translated replicase-transcriptase complex at a very early stage of infection. Post-translationally, ADP-ribosylated. The ADP-ribosylation is retained in the virion during infection. In terms of processing, phosphorylated on serine and threonine residues.

Its subcellular location is the virion. It localises to the host endoplasmic reticulum-Golgi intermediate compartment. It is found in the host Golgi apparatus. Its function is as follows. Packages the positive strand viral genome RNA into a helical ribonucleocapsid (RNP) and plays a fundamental role during virion assembly through its interactions with the viral genome and membrane protein M. Plays an important role in enhancing the efficiency of subgenomic viral RNA transcription as well as viral replication. This Avian infectious bronchitis virus (strain Arkansas 99) (IBV) protein is Nucleoprotein.